Here is a 130-residue protein sequence, read N- to C-terminus: Small ribosomal subunit protein uS9 (130 aa).

It belongs to the universal ribosomal protein uS9 family.

The chain is Small ribosomal subunit protein uS9 from Pseudomonas aeruginosa (strain LESB58).